Here is a 158-residue protein sequence, read N- to C-terminus: Transcriptional repressor NrdR (158 aa).

A zinc finger lies at 3–34 (CPFCSFPESRVLDSRPADEGNSIRRRRECGEC). Residues 49–139 (LVVVKKDGRR…VYRQFGDIYS (91 aa)) enclose the ATP-cone domain.

It belongs to the NrdR family. Zn(2+) serves as cofactor.

In terms of biological role, negatively regulates transcription of bacterial ribonucleotide reductase nrd genes and operons by binding to NrdR-boxes. This is Transcriptional repressor NrdR from Desulforamulus reducens (strain ATCC BAA-1160 / DSM 100696 / MI-1) (Desulfotomaculum reducens).